Consider the following 154-residue polypeptide: 6,7-dimethyl-8-ribityllumazine synthase (154 aa).

5-amino-6-(D-ribitylamino)uracil-binding positions include F26, 60 to 62 (ALE), and 84 to 86 (CII). 89 to 90 (ET) contacts (2S)-2-hydroxy-3-oxobutyl phosphate. H92 acts as the Proton donor in catalysis. Residue N117 participates in 5-amino-6-(D-ribitylamino)uracil binding. R131 is a (2S)-2-hydroxy-3-oxobutyl phosphate binding site.

Belongs to the DMRL synthase family.

It catalyses the reaction (2S)-2-hydroxy-3-oxobutyl phosphate + 5-amino-6-(D-ribitylamino)uracil = 6,7-dimethyl-8-(1-D-ribityl)lumazine + phosphate + 2 H2O + H(+). It functions in the pathway cofactor biosynthesis; riboflavin biosynthesis; riboflavin from 2-hydroxy-3-oxobutyl phosphate and 5-amino-6-(D-ribitylamino)uracil: step 1/2. In terms of biological role, catalyzes the formation of 6,7-dimethyl-8-ribityllumazine by condensation of 5-amino-6-(D-ribitylamino)uracil with 3,4-dihydroxy-2-butanone 4-phosphate. This is the penultimate step in the biosynthesis of riboflavin. The protein is 6,7-dimethyl-8-ribityllumazine synthase of Polaromonas sp. (strain JS666 / ATCC BAA-500).